We begin with the raw amino-acid sequence, 502 residues long: NAD(P)H-quinone oxidoreductase chain 4, chloroplastic (502 aa).

13 helical membrane-spanning segments follow: residues 4–24, 39–59, 89–109, 115–132, 136–156, 169–189, 209–229, 244–264, 276–296, 315–335, 387–407, 418–438, and 466–486; these read YPWLTIIVLLPIPAGLLIPLL, LGICLLEFLLITHTFCYHFDI, IGLTPLTGFVTTLATLAAWPV, LFHSSMLAMYSGQVGLFT, ILLFFLMWELELIPVYLLLSM, FILYTAGGSIPLLIGALTMGL, IALEIVLYLSFFVAYAVKLPI, HYSTCMLLAGILLKMGGYGLI, SIFAPWLVIVGAFQIVYAASI, MGFVLIGIGSATNIGLNGAIL, SLALPGTSGFAAESMVFPGIV, IIITIVEAIGIILTPIYLLSM, and IFISICLLLPTIGIGLYPNLI.

This sequence belongs to the complex I subunit 4 family.

It localises to the plastid. Its subcellular location is the chloroplast thylakoid membrane. It carries out the reaction a plastoquinone + NADH + (n+1) H(+)(in) = a plastoquinol + NAD(+) + n H(+)(out). The enzyme catalyses a plastoquinone + NADPH + (n+1) H(+)(in) = a plastoquinol + NADP(+) + n H(+)(out). The protein is NAD(P)H-quinone oxidoreductase chain 4, chloroplastic of Huperzia lucidula (Shining clubmoss).